The primary structure comprises 88 residues: YcgL domain-containing protein CGSHiGG_01115 (88 aa).

The 85-residue stretch at 1–85 (MLCAIYKSKK…QDDGLFNSLS (85 aa)) folds into the YcgL domain.

This is YcgL domain-containing protein CGSHiGG_01115 from Haemophilus influenzae (strain PittGG).